The primary structure comprises 419 residues: MDKFCVQGPTRLSGEVTISGAKNAALPILFAALLAEEPVEIQNVPKLKDIDTTMKLLGQLGARVERNGSVHVDASDVDVYCAPYELVKTMRASIWALGPLVARFGQGQVSLPGGCAIGARPVDLHISGLEQLGATIKLEEGYVKASVDGRLRGAHIVMDKVSVGATITIMSAATLATGTTIIENAAREPEIVDTANFLITLGAKISGAGTDKITIEGVERLGGGVYRVLPDRIETGTFLVAAAISRGRVVCHATRPDTLDAVLAKLREAGADIAVGDDWISLDMHGQRPKAVTVRTAPHPGFPTDMQAQFSLLNLVADGTGVITETIFENRFMHVPELIRMGAHAEIESNTVICHGVETLSGAQVMATDLRASASLVLAGCIAEGVTVVDRIYHIDRGYDCIEEKLRRMGANIERIRGE.

22–23 (KN) lines the phosphoenolpyruvate pocket. Position 91 (Arg91) interacts with UDP-N-acetyl-alpha-D-glucosamine. Cys115 functions as the Proton donor in the catalytic mechanism. The residue at position 115 (Cys115) is a 2-(S-cysteinyl)pyruvic acid O-phosphothioketal. Residues 120-124 (RPVDL), 160-163 (KVSV), Asp305, and Ile327 contribute to the UDP-N-acetyl-alpha-D-glucosamine site.

This sequence belongs to the EPSP synthase family. MurA subfamily.

The protein localises to the cytoplasm. It carries out the reaction phosphoenolpyruvate + UDP-N-acetyl-alpha-D-glucosamine = UDP-N-acetyl-3-O-(1-carboxyvinyl)-alpha-D-glucosamine + phosphate. It participates in cell wall biogenesis; peptidoglycan biosynthesis. Cell wall formation. Adds enolpyruvyl to UDP-N-acetylglucosamine. The protein is UDP-N-acetylglucosamine 1-carboxyvinyltransferase of Sodalis glossinidius (strain morsitans).